The following is a 659-amino-acid chain: Pheromone-processing carboxypeptidase kex1 (659 aa).

The N-terminal stretch at 1-38 (MAATTTTTNAGRSMASWKRLSTLIAAFTLSWTSSFVAA) is a signal peptide. The Lumenal portion of the chain corresponds to 39–527 (AGSADYFVHD…EMAKWEAYRK (489 aa)). S190 is an active-site residue. Residues N218 and N348 are each glycosylated (N-linked (GlcNAc...) asparagine). The active site involves D393. 2 N-linked (GlcNAc...) asparagine glycosylation sites follow: N444 and N452. H455 is a catalytic residue. The tract at residues 480–507 (IGGQPTDSRLDGEKLPETTVGGAAGNST) is disordered. A glycan (N-linked (GlcNAc...) asparagine) is linked at N505. Residues 528–548 (SGELVLVIVIVAAGVWGWFVW) traverse the membrane as a helical segment. At 549–659 (KERRKTAGQG…SSSRQPGGRS (111 aa)) the chain is on the cytoplasmic side. The tract at residues 565–659 (GERHSISNNP…SSSRQPGGRS (95 aa)) is disordered. The segment covering 616-630 (DDLHLSKPEDPHADS) has biased composition (basic and acidic residues). A compositionally biased stretch (polar residues) spans 649–659 (GSSSRQPGGRS).

The protein belongs to the peptidase S10 family.

The protein resides in the golgi apparatus. It localises to the trans-Golgi network membrane. The catalysed reaction is Preferential release of a C-terminal arginine or lysine residue.. Protease with a carboxypeptidase B-like function involved in the C-terminal processing of the lysine and arginine residues from protein precursors. Promotes cell fusion and is involved in the programmed cell death. This chain is Pheromone-processing carboxypeptidase kex1 (kex1), found in Neurospora crassa (strain ATCC 24698 / 74-OR23-1A / CBS 708.71 / DSM 1257 / FGSC 987).